Here is a 229-residue protein sequence, read N- to C-terminus: Cytidylate kinase (229 aa).

An ATP-binding site is contributed by 12 to 20 (GPSGVGKST).

The protein belongs to the cytidylate kinase family. Type 1 subfamily.

It is found in the cytoplasm. The catalysed reaction is CMP + ATP = CDP + ADP. It catalyses the reaction dCMP + ATP = dCDP + ADP. This Mesomycoplasma hyopneumoniae (strain 7448) (Mycoplasma hyopneumoniae) protein is Cytidylate kinase.